A 510-amino-acid polypeptide reads, in one-letter code: GMP synthase [glutamine-hydrolyzing] (510 aa).

Residues 5–195 (TVVVLDFGGQ…LFEICGLRGD (191 aa)) form the Glutamine amidotransferase type-1 domain. Catalysis depends on cysteine 82, which acts as the Nucleophile. Active-site residues include histidine 169 and glutamate 171. The region spanning 196–385 (WDLSDFISEA…LGIPAEILWR (190 aa)) is the GMPS ATP-PPase domain. 223–229 (SGGVDSS) contacts ATP.

In terms of assembly, homodimer.

It catalyses the reaction XMP + L-glutamine + ATP + H2O = GMP + L-glutamate + AMP + diphosphate + 2 H(+). The protein operates within purine metabolism; GMP biosynthesis; GMP from XMP (L-Gln route): step 1/1. Catalyzes the synthesis of GMP from XMP. The polypeptide is GMP synthase [glutamine-hydrolyzing] (Syntrophomonas wolfei subsp. wolfei (strain DSM 2245B / Goettingen)).